Here is a 253-residue protein sequence, read N- to C-terminus: Phosphoribosylaminoimidazole-succinocarboxamide synthase (253 aa).

It belongs to the SAICAR synthetase family.

It catalyses the reaction 5-amino-1-(5-phospho-D-ribosyl)imidazole-4-carboxylate + L-aspartate + ATP = (2S)-2-[5-amino-1-(5-phospho-beta-D-ribosyl)imidazole-4-carboxamido]succinate + ADP + phosphate + 2 H(+). Its pathway is purine metabolism; IMP biosynthesis via de novo pathway; 5-amino-1-(5-phospho-D-ribosyl)imidazole-4-carboxamide from 5-amino-1-(5-phospho-D-ribosyl)imidazole-4-carboxylate: step 1/2. In Jannaschia sp. (strain CCS1), this protein is Phosphoribosylaminoimidazole-succinocarboxamide synthase.